A 395-amino-acid polypeptide reads, in one-letter code: Elongation factor Tu (395 aa).

The region spanning 10–204 is the tr-type G domain; sequence KPHVNVGTIG…AVDNWVPLPE (195 aa). Positions 19-26 are G1; the sequence is GHVDHGKT. A GTP-binding site is contributed by 19–26; the sequence is GHVDHGKT. Position 26 (T26) interacts with Mg(2+). The tract at residues 60–64 is G2; sequence GITIN. The segment at 81–84 is G3; the sequence is DCPG. GTP is bound by residues 81–85 and 136–139; these read DCPGH and NKCD. The segment at 136-139 is G4; that stretch reads NKCD. The tract at residues 174 to 176 is G5; it reads SAL.

Belongs to the TRAFAC class translation factor GTPase superfamily. Classic translation factor GTPase family. EF-Tu/EF-1A subfamily. In terms of assembly, monomer.

Its subcellular location is the cytoplasm. It carries out the reaction GTP + H2O = GDP + phosphate + H(+). In terms of biological role, GTP hydrolase that promotes the GTP-dependent binding of aminoacyl-tRNA to the A-site of ribosomes during protein biosynthesis. The chain is Elongation factor Tu from Porphyromonas gingivalis (strain ATCC 33277 / DSM 20709 / CIP 103683 / JCM 12257 / NCTC 11834 / 2561).